The primary structure comprises 163 residues: Nucleotide-binding protein HAPS_2236 (163 aa).

Belongs to the YajQ family.

In terms of biological role, nucleotide-binding protein. This is Nucleotide-binding protein HAPS_2236 from Glaesserella parasuis serovar 5 (strain SH0165) (Haemophilus parasuis).